Reading from the N-terminus, the 534-residue chain is Echilunin cytochrome P450 monooxygenase (534 aa).

The chain crosses the membrane as a helical span at residues 18 to 38 (VSPAALSWAVVAIYLGTFFWL). Position 441 (Cys-441) interacts with heme.

The protein belongs to the cytochrome P450 family. Heme is required as a cofactor.

The protein localises to the membrane. The enzyme catalyses preechinulin + reduced [NADPH--hemoprotein reductase] + O2 = neoechinulin A + oxidized [NADPH--hemoprotein reductase] + 2 H2O + H(+). Its pathway is secondary metabolite biosynthesis. The protein operates within alkaloid biosynthesis. In terms of biological role, cytochrome P450 monooxygenase; part of the gene cluster that mediates the biosynthesis of echinulin family alkaloid. The pathway begins with the biosynthesis of the cyclic dipeptide cyclo-L-Trp-L-Ala (cyclo-TA) by the NRPS echPS via condensation of L-alanine and L-tryptophan. The prenyltransferase echPT1 then catalyzes the first prenylation step, a reverse prenylation reaction at C2, to yield preechinulin. Preechinulin is the substrate of the cytochrome P450 monooxygenase echP450 that catalyzes the formation of the double bond between C10 and C11 to produce neoechulin A. The unique prenyltransferase echPT2 functions as a competitive enzyme with echP450 for preechinulin metabolization and uses preechinulin for effective regiospecific prenylations. Preechinulin is prenylated by echPT2 at C5 or C7. C7-prenylation leads to accumulation of tardioxopiperazine B without further modification by echPT2. In contrast, the C5-prenylated tardioxopiperazine A can be prenylated again by echPT2, predominantly at C7 to form echinulin or less frequently at C4 to give variecolorin L. EchPT2 also accepts neoechilunin A to produce varlecolorin G (prenylation at C5) or isoechinulin A (prenylation at C7). EchPT2 further converts isoechinulin A into dehydroechinulin. Moreover, a yet unidentified enzyme can also convert neoechilunin A into neoechilunin B by introducing a double bond between positions C14 and C17 and thus provides a further substrate to echPT2 for C5 and C7 prenylation. This Aspergillus ruber (strain CBS 135680) protein is Echilunin cytochrome P450 monooxygenase.